Reading from the N-terminus, the 423-residue chain is Mannose-6-phosphate isomerase (423 aa).

Ala2 bears the N-acetylalanine mark. Ser102 and Ser108 each carry phosphoserine. Gln110, His112, Glu137, and His276 together coordinate Zn(2+). Residue Arg295 is part of the active site.

It belongs to the mannose-6-phosphate isomerase type 1 family. Requires Zn(2+) as cofactor. As to expression, expressed in all tissues, but more abundant in testis.

It is found in the cytoplasm. It carries out the reaction D-mannose 6-phosphate = D-fructose 6-phosphate. It participates in nucleotide-sugar biosynthesis; GDP-alpha-D-mannose biosynthesis; alpha-D-mannose 1-phosphate from D-fructose 6-phosphate: step 1/2. Functionally, isomerase that catalyzes the interconversion of fructose-6-P and mannose-6-P and has a critical role in the supply of D-mannose derivatives required for many eukaryotic glycosylation reactions. The protein is Mannose-6-phosphate isomerase of Mus musculus (Mouse).